Here is a 48-residue protein sequence, read N- to C-terminus: M-oxotoxin-Ot1a (48 aa).

In terms of tissue distribution, expressed by the venom gland.

The protein localises to the secreted. The protein resides in the target cell membrane. In terms of biological role, disrupts cell membranes, particularly those rich in phosphocholine, through formation of pores. Has antimicrobial activity against Gram-negative bacterium E.coli, Gram-positive bacteria B.subtilis and S.aureus, and hemolytic activity against sheep, pig and guinea pig erythrocytes. Has insecticidal activity against S.frugiperda ovarian cells by opening non-selective ion channels. Enhances the insecticidal activity of spider venom neurotoxic peptides. This Oxyopes takobius (Lynx spider) protein is M-oxotoxin-Ot1a.